We begin with the raw amino-acid sequence, 354 residues long: Ornithine carbamoyltransferase, catabolic (354 aa).

Carbamoyl phosphate contacts are provided by residues 67–70, Gln94, Arg118, and 145–148; these read STRT and HPTQ. L-ornithine-binding positions include Asn177, Asp241, and 245 to 246; that span reads SM. Residues 284–285 and Arg329 each bind carbamoyl phosphate; that span reads CL.

This sequence belongs to the aspartate/ornithine carbamoyltransferase superfamily. OTCase family.

It is found in the cytoplasm. The enzyme catalyses carbamoyl phosphate + L-ornithine = L-citrulline + phosphate + H(+). Its pathway is amino-acid degradation; L-arginine degradation via ADI pathway; carbamoyl phosphate from L-arginine: step 2/2. Functionally, reversibly catalyzes the transfer of the carbamoyl group from carbamoyl phosphate (CP) to the N(epsilon) atom of ornithine (ORN) to produce L-citrulline. This chain is Ornithine carbamoyltransferase, catabolic (arcB), found in Lactococcus lactis subsp. cremoris (strain MG1363).